Consider the following 178-residue polypeptide: Nicotinamide-nucleotide adenylyltransferase (178 aa).

It belongs to the archaeal NMN adenylyltransferase family.

It is found in the cytoplasm. The catalysed reaction is beta-nicotinamide D-ribonucleotide + ATP + H(+) = diphosphate + NAD(+). It functions in the pathway cofactor biosynthesis; NAD(+) biosynthesis; NAD(+) from nicotinamide D-ribonucleotide: step 1/1. The sequence is that of Nicotinamide-nucleotide adenylyltransferase from Thermoplasma volcanium (strain ATCC 51530 / DSM 4299 / JCM 9571 / NBRC 15438 / GSS1).